Consider the following 426-residue polypeptide: Serine hydroxymethyltransferase (426 aa).

(6S)-5,6,7,8-tetrahydrofolate contacts are provided by residues leucine 121 and glycine 125–leucine 127. Lysine 230 bears the N6-(pyridoxal phosphate)lysine mark. A (6S)-5,6,7,8-tetrahydrofolate-binding site is contributed by serine 354 to phenylalanine 356.

The protein belongs to the SHMT family. As to quaternary structure, homodimer. Pyridoxal 5'-phosphate is required as a cofactor.

It is found in the cytoplasm. The enzyme catalyses (6R)-5,10-methylene-5,6,7,8-tetrahydrofolate + glycine + H2O = (6S)-5,6,7,8-tetrahydrofolate + L-serine. It participates in one-carbon metabolism; tetrahydrofolate interconversion. The protein operates within amino-acid biosynthesis; glycine biosynthesis; glycine from L-serine: step 1/1. Functionally, catalyzes the reversible interconversion of serine and glycine with tetrahydrofolate (THF) serving as the one-carbon carrier. This reaction serves as the major source of one-carbon groups required for the biosynthesis of purines, thymidylate, methionine, and other important biomolecules. Also exhibits THF-independent aldolase activity toward beta-hydroxyamino acids, producing glycine and aldehydes, via a retro-aldol mechanism. The chain is Serine hydroxymethyltransferase from Gloeobacter violaceus (strain ATCC 29082 / PCC 7421).